We begin with the raw amino-acid sequence, 232 residues long: Probable phospholipid hydroperoxide glutathione peroxidase 6, mitochondrial (232 aa).

The transit peptide at M1–G54 directs the protein to the mitochondrion. C105 is a catalytic residue.

It belongs to the glutathione peroxidase family. In terms of tissue distribution, expressed at a low but detectable level in leaves, stems, and flowers, but at a higher level in siliques and even higher in roots. Predominantly expressed in seeds.

It localises to the mitochondrion. The catalysed reaction is a hydroperoxy polyunsaturated fatty acid + 2 glutathione = a hydroxy polyunsaturated fatty acid + glutathione disulfide + H2O. Protects cells and enzymes from oxidative damage, by catalyzing the reduction of hydrogen peroxide, lipid peroxides and organic hydroperoxide, by glutathione. In Arabidopsis thaliana (Mouse-ear cress), this protein is Probable phospholipid hydroperoxide glutathione peroxidase 6, mitochondrial (GPX6).